The primary structure comprises 106 residues: Iron-sulfur cluster assembly protein CyaY (106 aa).

The protein belongs to the frataxin family.

Functionally, involved in iron-sulfur (Fe-S) cluster assembly. May act as a regulator of Fe-S biogenesis. This Yersinia pseudotuberculosis serotype O:3 (strain YPIII) protein is Iron-sulfur cluster assembly protein CyaY.